The sequence spans 28 residues: leu operon leader peptide (28 aa).

Functionally, involved in control of the biosynthesis of leucine. The sequence is that of leu operon leader peptide (leuL) from Shigella flexneri.